Here is a 629-residue protein sequence, read N- to C-terminus: tRNA uridine 5-carboxymethylaminomethyl modification enzyme MnmG (629 aa).

13–18 (GGGHAG) is a binding site for FAD. NAD(+) is bound at residue 273–287 (GPRYCPSIEDKIVRF).

Belongs to the MnmG family. Homodimer. Heterotetramer of two MnmE and two MnmG subunits. It depends on FAD as a cofactor.

It localises to the cytoplasm. In terms of biological role, NAD-binding protein involved in the addition of a carboxymethylaminomethyl (cmnm) group at the wobble position (U34) of certain tRNAs, forming tRNA-cmnm(5)s(2)U34. The protein is tRNA uridine 5-carboxymethylaminomethyl modification enzyme MnmG of Pseudoalteromonas translucida (strain TAC 125).